The following is a 95-amino-acid chain: Aspartyl/glutamyl-tRNA(Asn/Gln) amidotransferase subunit C (95 aa).

Belongs to the GatC family. Heterotrimer of A, B and C subunits.

The enzyme catalyses L-glutamyl-tRNA(Gln) + L-glutamine + ATP + H2O = L-glutaminyl-tRNA(Gln) + L-glutamate + ADP + phosphate + H(+). It catalyses the reaction L-aspartyl-tRNA(Asn) + L-glutamine + ATP + H2O = L-asparaginyl-tRNA(Asn) + L-glutamate + ADP + phosphate + 2 H(+). Functionally, allows the formation of correctly charged Asn-tRNA(Asn) or Gln-tRNA(Gln) through the transamidation of misacylated Asp-tRNA(Asn) or Glu-tRNA(Gln) in organisms which lack either or both of asparaginyl-tRNA or glutaminyl-tRNA synthetases. The reaction takes place in the presence of glutamine and ATP through an activated phospho-Asp-tRNA(Asn) or phospho-Glu-tRNA(Gln). This Nitrobacter winogradskyi (strain ATCC 25391 / DSM 10237 / CIP 104748 / NCIMB 11846 / Nb-255) protein is Aspartyl/glutamyl-tRNA(Asn/Gln) amidotransferase subunit C.